A 135-amino-acid chain; its full sequence is Flagellar assembly factor FliW 1 (135 aa).

The protein belongs to the FliW family. As to quaternary structure, interacts with translational regulator CsrA and flagellin(s).

Its subcellular location is the cytoplasm. Acts as an anti-CsrA protein, binds CsrA and prevents it from repressing translation of its target genes, one of which is flagellin. Binds to flagellin and participates in the assembly of the flagellum. This Helicobacter pylori (strain HPAG1) protein is Flagellar assembly factor FliW 1.